The following is a 328-amino-acid chain: MNLMRTAMLLAFMTALFMGVGYLIGGQSGMMIAFVAAAGMNFFSYWNSDRMVLSTYGAQEVDERSAPEFYGIVRDLARNAGLPMPKVYLYDNPQPNAFATGRNPQNAAVAASTGLLHALTPQEVAGVMAHELAHVQNRDTLTMTITATLAGAISMLGNFAFFFGGRRDNNNPLGAIGVLAAMIVAPLAAMLVQMAISRTREYSADRRGAEICGNPLWLASALGKIARGAAHIPNEEAEGHPATAHMFIINPLSGARMDNLFSTHPDTENRIAALHEMAQYGGGTGPSVGTPTRSGSTGPAMTANPERKSRSVPNTGRGGSQPPKGPWS.

2 helical membrane passes run T6–G26 and S28–S48. H130 serves as a coordination point for Zn(2+). Residue E131 is part of the active site. H134 contributes to the Zn(2+) binding site. The next 2 membrane-spanning stretches (helical) occupy residues I145–G165 and P172–V192. Residue E201 participates in Zn(2+) binding. The disordered stretch occupies residues Q279–S328. The segment covering S287 to P299 has biased composition (low complexity).

It belongs to the peptidase M48B family. It depends on Zn(2+) as a cofactor.

It is found in the cell inner membrane. This is Protease HtpX homolog from Rhizobium rhizogenes (strain K84 / ATCC BAA-868) (Agrobacterium radiobacter).